A 961-amino-acid polypeptide reads, in one-letter code: Mitogen-activated protein kinase kinase kinase 13-A (961 aa).

The tract at residues 88–118 is disordered; that stretch reads LRDQDEPENTAPQGSSHSGDGGSYSGNEDIR. A Protein kinase domain is found at 169–410; it reads ISELQWLGSG…FRQILMHLDI (242 aa). ATP is bound by residues 175 to 183 and Lys-196; that span reads LGSGAQGAV. Asp-280 functions as the Proton acceptor in the catalytic mechanism. Leucine-zipper regions lie at residues 434-455 and 487-508; these read VKKHFEKIKSEGTCIHRLDEEL and LSAIMLQLEVREKELIRREQAV. A coiled-coil region spans residues 458–497; that stretch reads RRREELRHALDIREHYERKLERANNLYMELSAIMLQLEVR. 3 disordered regions span residues 513 to 600, 615 to 637, and 799 to 883; these read PGTY…SKGS, ALSQQSSQHQTLASPPVTSCSPY, and RRIR…KLDD. Residues 560-578 are compositionally biased toward low complexity; the sequence is SAEGSAASASPISGSPKTS. Over residues 584-596 the composition is skewed to basic residues; that stretch reads NRYRSKPRHRRVN. The segment covering 810–823 has biased composition (acidic residues); the sequence is ESSEEEEGEVDSEV. The acidic stretch occupies residues 811–824; that stretch reads SSEEEEGEVDSEVE. Polar residues predominate over residues 837–851; that stretch reads KCQSYSTFSSENFSV.

The protein belongs to the protein kinase superfamily. Ser/Thr protein kinase family.

It localises to the cytoplasm. It is found in the membrane. The catalysed reaction is L-seryl-[protein] + ATP = O-phospho-L-seryl-[protein] + ADP + H(+). The enzyme catalyses L-threonyl-[protein] + ATP = O-phospho-L-threonyl-[protein] + ADP + H(+). In terms of biological role, may have a role in the JNK signaling pathway. The protein is Mitogen-activated protein kinase kinase kinase 13-A (map3k13-a) of Xenopus laevis (African clawed frog).